The chain runs to 195 residues: FMN-dependent NADH:quinone oxidoreductase 2 (195 aa).

Residues 16–18 (SVS) and 85–88 (MWNL) contribute to the FMN site.

Belongs to the azoreductase type 1 family. As to quaternary structure, homodimer. The cofactor is FMN.

It catalyses the reaction 2 a quinone + NADH + H(+) = 2 a 1,4-benzosemiquinone + NAD(+). It carries out the reaction N,N-dimethyl-1,4-phenylenediamine + anthranilate + 2 NAD(+) = 2-(4-dimethylaminophenyl)diazenylbenzoate + 2 NADH + 2 H(+). Functionally, quinone reductase that provides resistance to thiol-specific stress caused by electrophilic quinones. Also exhibits azoreductase activity. Catalyzes the reductive cleavage of the azo bond in aromatic azo compounds to the corresponding amines. The sequence is that of FMN-dependent NADH:quinone oxidoreductase 2 from Photobacterium profundum (strain SS9).